The chain runs to 759 residues: Phosphoribosylformylglycinamidine synthase subunit PurL (759 aa).

His-61 is an active-site residue. ATP-binding residues include Tyr-64 and Lys-105. Glu-107 is a Mg(2+) binding site. Residues 108–111 (SHNH) and Arg-130 each bind substrate. Residue His-109 is the Proton acceptor of the active site. Position 131 (Asp-131) interacts with Mg(2+). Gln-260 provides a ligand contact to substrate. Asp-288 is a binding site for Mg(2+). Residue 332–334 (ESQ) participates in substrate binding. Positions 520 and 557 each coordinate ATP. Asn-558 is a Mg(2+) binding site. Ser-560 provides a ligand contact to substrate.

This sequence belongs to the FGAMS family. In terms of assembly, monomer. Part of the FGAM synthase complex composed of 1 PurL, 1 PurQ and 2 PurS subunits.

The protein localises to the cytoplasm. It catalyses the reaction N(2)-formyl-N(1)-(5-phospho-beta-D-ribosyl)glycinamide + L-glutamine + ATP + H2O = 2-formamido-N(1)-(5-O-phospho-beta-D-ribosyl)acetamidine + L-glutamate + ADP + phosphate + H(+). Its pathway is purine metabolism; IMP biosynthesis via de novo pathway; 5-amino-1-(5-phospho-D-ribosyl)imidazole from N(2)-formyl-N(1)-(5-phospho-D-ribosyl)glycinamide: step 1/2. In terms of biological role, part of the phosphoribosylformylglycinamidine synthase complex involved in the purines biosynthetic pathway. Catalyzes the ATP-dependent conversion of formylglycinamide ribonucleotide (FGAR) and glutamine to yield formylglycinamidine ribonucleotide (FGAM) and glutamate. The FGAM synthase complex is composed of three subunits. PurQ produces an ammonia molecule by converting glutamine to glutamate. PurL transfers the ammonia molecule to FGAR to form FGAM in an ATP-dependent manner. PurS interacts with PurQ and PurL and is thought to assist in the transfer of the ammonia molecule from PurQ to PurL. The polypeptide is Phosphoribosylformylglycinamidine synthase subunit PurL (Thermoplasma volcanium (strain ATCC 51530 / DSM 4299 / JCM 9571 / NBRC 15438 / GSS1)).